The primary structure comprises 147 residues: uncharacterized protein (147 aa).

The 89-residue stretch at 50 to 138 folds into the ABM domain; it reads IVVAGNIKVK…LLAKPAEIKI (89 aa).

The protein belongs to the LsrG family.

This is an uncharacterized protein from Synechocystis sp. (strain ATCC 27184 / PCC 6803 / Kazusa).